A 483-amino-acid polypeptide reads, in one-letter code: Phosphoglucosamine mutase (483 aa).

The active-site Phosphoserine intermediate is the S131. Mg(2+)-binding residues include S131, D272, D274, and D276. S131 is subject to Phosphoserine.

This sequence belongs to the phosphohexose mutase family. It depends on Mg(2+) as a cofactor. In terms of processing, activated by phosphorylation.

The enzyme catalyses alpha-D-glucosamine 1-phosphate = D-glucosamine 6-phosphate. Functionally, catalyzes the conversion of glucosamine-6-phosphate to glucosamine-1-phosphate. This Magnetococcus marinus (strain ATCC BAA-1437 / JCM 17883 / MC-1) protein is Phosphoglucosamine mutase.